Here is a 222-residue protein sequence, read N- to C-terminus: Adapter protein MecA (222 aa).

This sequence belongs to the MecA family. Homodimer.

Enables the recognition and targeting of unfolded and aggregated proteins to the ClpC protease or to other proteins involved in proteolysis. The sequence is that of Adapter protein MecA from Lysinibacillus sphaericus (strain C3-41).